A 127-amino-acid chain; its full sequence is Large ribosomal subunit protein bL12 (127 aa).

Belongs to the bacterial ribosomal protein bL12 family. As to quaternary structure, homodimer. Part of the ribosomal stalk of the 50S ribosomal subunit. Forms a multimeric L10(L12)X complex, where L10 forms an elongated spine to which 2 to 4 L12 dimers bind in a sequential fashion. Binds GTP-bound translation factors.

Forms part of the ribosomal stalk which helps the ribosome interact with GTP-bound translation factors. Is thus essential for accurate translation. This is Large ribosomal subunit protein bL12 from Sinorhizobium fredii (strain NBRC 101917 / NGR234).